The chain runs to 293 residues: 4-hydroxy-tetrahydrodipicolinate synthase (293 aa).

Position 45 (Thr-45) interacts with pyruvate. The active-site Proton donor/acceptor is the Tyr-133. Lys-161 (schiff-base intermediate with substrate) is an active-site residue. A pyruvate-binding site is contributed by Val-203.

This sequence belongs to the DapA family. Homotetramer; dimer of dimers.

The protein resides in the cytoplasm. It carries out the reaction L-aspartate 4-semialdehyde + pyruvate = (2S,4S)-4-hydroxy-2,3,4,5-tetrahydrodipicolinate + H2O + H(+). Its pathway is amino-acid biosynthesis; L-lysine biosynthesis via DAP pathway; (S)-tetrahydrodipicolinate from L-aspartate: step 3/4. Its function is as follows. Catalyzes the condensation of (S)-aspartate-beta-semialdehyde [(S)-ASA] and pyruvate to 4-hydroxy-tetrahydrodipicolinate (HTPA). The protein is 4-hydroxy-tetrahydrodipicolinate synthase of Exiguobacterium sp. (strain ATCC BAA-1283 / AT1b).